A 131-amino-acid chain; its full sequence is mRNA stability protein IGO2 (131 aa).

Over residues 1-13 (MSEDLSPTSSRVD) the composition is skewed to polar residues. Residues 1-26 (MSEDLSPTSSRVDLSNPHGFTKEGVD) are disordered. S2 bears the N-acetylserine mark. Phosphoserine is present on residues S6, S63, S108, and S119. The segment at 81-131 (VNNSSNNLPVTNPSGLRESIIRRRMSSSSGGDSISRQGSISSGPPPRSPNK) is disordered. Residues 106–122 (SSSSGGDSISRQGSISS) show a composition bias toward low complexity.

This sequence belongs to the endosulfine family. In terms of processing, phosphorylated by RIM15.

The protein resides in the cytoplasm. The protein localises to the nucleus. Functionally, required for TORC1 to properly control gene expression and chronological life span. Plays an essential role in initiation of the G0 program by preventing the degradation of specific nutrient-regulated mRNAs via the 5'-3' mRNA decay pathway. The sequence is that of mRNA stability protein IGO2 (IGO2) from Saccharomyces cerevisiae (strain ATCC 204508 / S288c) (Baker's yeast).